Consider the following 266-residue polypeptide: Hydroxyacylglutathione hydrolase (266 aa).

Zn(2+)-binding residues include H53, H55, D57, H58, H118, D140, and H178.

Belongs to the metallo-beta-lactamase superfamily. Glyoxalase II family. In terms of assembly, monomer. It depends on Zn(2+) as a cofactor.

It carries out the reaction an S-(2-hydroxyacyl)glutathione + H2O = a 2-hydroxy carboxylate + glutathione + H(+). It functions in the pathway secondary metabolite metabolism; methylglyoxal degradation; (R)-lactate from methylglyoxal: step 2/2. Its function is as follows. Thiolesterase that catalyzes the hydrolysis of S-D-lactoyl-glutathione to form glutathione and D-lactic acid. The chain is Hydroxyacylglutathione hydrolase from Cupriavidus taiwanensis (strain DSM 17343 / BCRC 17206 / CCUG 44338 / CIP 107171 / LMG 19424 / R1) (Ralstonia taiwanensis (strain LMG 19424)).